Here is a 382-residue protein sequence, read N- to C-terminus: Lipid-A-disaccharide synthase (382 aa).

It belongs to the LpxB family.

It catalyses the reaction 2-N,3-O-bis[(3R)-3-hydroxytetradecanoyl]-alpha-D-glucosaminyl 1-phosphate + UDP-2-N,3-O-bis[(3R)-3-hydroxytetradecanoyl]-alpha-D-glucosamine = lipid A disaccharide (E. coli) + UDP + H(+). The catalysed reaction is a lipid X + a UDP-2-N,3-O-bis[(3R)-3-hydroxyacyl]-alpha-D-glucosamine = a lipid A disaccharide + UDP + H(+). Its pathway is glycolipid biosynthesis; lipid IV(A) biosynthesis; lipid IV(A) from (3R)-3-hydroxytetradecanoyl-[acyl-carrier-protein] and UDP-N-acetyl-alpha-D-glucosamine: step 5/6. Condensation of UDP-2,3-diacylglucosamine and 2,3-diacylglucosamine-1-phosphate to form lipid A disaccharide, a precursor of lipid A, a phosphorylated glycolipid that anchors the lipopolysaccharide to the outer membrane of the cell. The protein is Lipid-A-disaccharide synthase of Escherichia coli (strain K12 / MC4100 / BW2952).